We begin with the raw amino-acid sequence, 227 residues long: 2-phospho-L-lactate guanylyltransferase (227 aa).

The protein belongs to the CofC family. As to quaternary structure, homodimer.

The enzyme catalyses (2S)-2-phospholactate + GTP + H(+) = (2S)-lactyl-2-diphospho-5'-guanosine + diphosphate. The protein operates within cofactor biosynthesis; coenzyme F420 biosynthesis. Its function is as follows. Guanylyltransferase that catalyzes the activation of (2S)-2-phospholactate (2-PL) as (2S)-lactyl-2-diphospho-5'-guanosine, via the condensation of 2-PL with GTP. It is involved in the biosynthesis of coenzyme F420, a hydride carrier cofactor. The sequence is that of 2-phospho-L-lactate guanylyltransferase from Methanocaldococcus sp. (strain FS406-22).